The following is a 512-amino-acid chain: Oryzalexin E synthase (512 aa).

Residues 6–26 (SELWMTAVATCMSLLLYLTIL) form a helical membrane-spanning segment. Residue Cys452 participates in heme binding.

It belongs to the cytochrome P450 family. It depends on heme as a cofactor.

Its subcellular location is the membrane. It catalyses the reaction ent-sandaracopimaradien-3beta-ol + reduced [NADPH--hemoprotein reductase] + O2 = oryzalexin E + oxidized [NADPH--hemoprotein reductase] + H2O + H(+). Its function is as follows. Enzyme of the diterpenoid metabolism involved in the biosynthesis of the oryzalexin class of phytoalexins. Can use ent-sandaracopimaradien and syn-stemodene as substrates, but no activity with syn-stemoden-19-oic acid. Hydroxylates 3-alpha-hydroxy-ent-sandaracopimaradiene at C-9-beta, resulting in a 3-alpha,9-beta-diol corresponding to oryzalexins E. The polypeptide is Oryzalexin E synthase (Oryza sativa subsp. japonica (Rice)).